A 252-amino-acid polypeptide reads, in one-letter code: Putative peptide zinc metalloprotease protein YydH (252 aa).

A run of 2 helical transmembrane segments spans residues 56–76 (FFYL…IHLI) and 85–105 (VFYG…NIVL). H106 lines the Zn(2+) pocket. The active site involves E107. Residue H110 participates in Zn(2+) binding. 3 helical membrane-spanning segments follow: residues 152–172 (IIVH…LELI), 181–201 (ALTM…IPIL), and 231–251 (IQII…LYIV).

The protein belongs to the peptidase M50B family. Zn(2+) serves as cofactor.

The protein resides in the cell membrane. Its function is as follows. Required for production of the modified peptide YydF. May process the precursor form of YydF to release the active peptide (Potential). In Bacillus subtilis (strain 168), this protein is Putative peptide zinc metalloprotease protein YydH (yydH).